Reading from the N-terminus, the 273-residue chain is Protein FAM216A (273 aa).

A disordered region spans residues 1-47 (MLGQLLPHTARGLGAAEMPGQGPGSDWTERSSSAEPPAVAGTEGGGG).

This sequence belongs to the FAM216 family.

The sequence is that of Protein FAM216A (FAM216A) from Homo sapiens (Human).